The chain runs to 342 residues: GTPase Obg (342 aa).

The 159-residue stretch at 1–159 (MQFIDRAEIE…RNLRLELKLL (159 aa)) folds into the Obg domain. An OBG-type G domain is found at 160–328 (AEVGIIGLPN…LLQAIWHRLD (169 aa)). GTP is bound by residues 166-173 (GLPNAGKS), 191-195 (FTTLV), 213-216 (DIPG), 280-283 (NKVD), and 309-311 (SAV). Positions 173 and 193 each coordinate Mg(2+).

This sequence belongs to the TRAFAC class OBG-HflX-like GTPase superfamily. OBG GTPase family. In terms of assembly, monomer. The cofactor is Mg(2+).

It is found in the cytoplasm. An essential GTPase which binds GTP, GDP and possibly (p)ppGpp with moderate affinity, with high nucleotide exchange rates and a fairly low GTP hydrolysis rate. Plays a role in control of the cell cycle, stress response, ribosome biogenesis and in those bacteria that undergo differentiation, in morphogenesis control. The polypeptide is GTPase Obg (Crocosphaera subtropica (strain ATCC 51142 / BH68) (Cyanothece sp. (strain ATCC 51142))).